A 347-amino-acid chain; its full sequence is NADH-quinone oxidoreductase subunit H (347 aa).

The next 9 membrane-spanning stretches (helical) occupy residues Ile-13–Val-33, Pro-50–Phe-70, Ala-82–Val-102, Val-115–Gly-135, Ile-161–Val-181, Phe-198–Leu-218, Cys-263–Leu-283, Val-286–Val-306, and Leu-321–Leu-341.

It belongs to the complex I subunit 1 family. NDH-1 is composed of 14 different subunits. Subunits NuoA, H, J, K, L, M, N constitute the membrane sector of the complex.

The protein localises to the cell inner membrane. The enzyme catalyses a quinone + NADH + 5 H(+)(in) = a quinol + NAD(+) + 4 H(+)(out). Its function is as follows. NDH-1 shuttles electrons from NADH, via FMN and iron-sulfur (Fe-S) centers, to quinones in the respiratory chain. The immediate electron acceptor for the enzyme in this species is believed to be ubiquinone. Couples the redox reaction to proton translocation (for every two electrons transferred, four hydrogen ions are translocated across the cytoplasmic membrane), and thus conserves the redox energy in a proton gradient. This subunit may bind ubiquinone. This Rhizobium johnstonii (strain DSM 114642 / LMG 32736 / 3841) (Rhizobium leguminosarum bv. viciae) protein is NADH-quinone oxidoreductase subunit H.